A 109-amino-acid polypeptide reads, in one-letter code: Probable guanidinium efflux system subunit GdnC (109 aa).

4 helical membrane passes run Trp-3–Ala-23, Ala-26–Ala-46, Val-55–Phe-75, and Ile-81–Thr-101.

Belongs to the drug/metabolite transporter (DMT) superfamily. Small multidrug resistance (SMR) (TC 2.A.7.1) family. YkkC/YkkD subfamily. The efflux pump is composed of GdnC and GdnD.

It localises to the cell membrane. In terms of biological role, probably involved in guanidinium transport. This Bacillus licheniformis (strain ATCC 14580 / DSM 13 / JCM 2505 / CCUG 7422 / NBRC 12200 / NCIMB 9375 / NCTC 10341 / NRRL NRS-1264 / Gibson 46) protein is Probable guanidinium efflux system subunit GdnC.